A 2131-amino-acid chain; its full sequence is Protein Ycf2 (2131 aa).

Gly-1466–Ser-1473 is an ATP binding site.

It belongs to the Ycf2 family.

It is found in the plastid. The protein localises to the chloroplast stroma. In terms of biological role, probable ATPase of unknown function. Its presence in a non-photosynthetic plant (Epifagus virginiana) and experiments in tobacco indicate that it has an essential function which is probably not related to photosynthesis. This is Protein Ycf2 from Helianthus annuus (Common sunflower).